A 760-amino-acid chain; its full sequence is Rho GTPase-activating protein 26 (760 aa).

The BAR domain occupies 7-262 (EFSECCLDSP…MKENPHEHKN (256 aa)). Residues 265–369 (PYTMEGYLYV…WMEAMDGREP (105 aa)) form the PH domain. Positions 383–568 (AQLDSIGFSI…ILIENHEKIF (186 aa)) constitute a Rho-GAP domain. Disordered stretches follow at residues 571-617 (VPET…ESRN) and 658-701 (PNRP…SPIS). Polar residues predominate over residues 605-617 (HTAQPNEKQESRN). Residues 674–701 (LSPSWPMFSAPSSPMPTSSTSSDSSPIS) show a composition bias toward low complexity. Positions 702–760 (SPLRKARALYACKAEHDSELSFTAGTVFDNVHPSQEPGWLEGTLNGKTGLIPENYVEFL) constitute an SH3 domain.

As to quaternary structure, binds to the C-terminus of PTK2/FAK1. In terms of tissue distribution, detected in embryonic brain and liver, and at low levels in embryonic eye, heart, lung, intestine and skeletal muscle.

The protein localises to the cell junction. Its subcellular location is the focal adhesion. The protein resides in the cytoplasm. It localises to the cytoskeleton. It is found in the endosome membrane. Functionally, GTPase-activating protein for RHOA and CDC42. May be involved in the regulation of neosynthesized protein export through a Rab-endososomal dependent export route. In Gallus gallus (Chicken), this protein is Rho GTPase-activating protein 26 (ARHGAP26).